The chain runs to 130 residues: Small ribosomal subunit protein bS18 (130 aa).

2 stretches are compositionally biased toward basic and acidic residues: residues 98 to 108 (KKMEESVKSAE) and 117 to 130 (EESK…AKTE). The tract at residues 98–130 (KKMEESVKSAEPKATAEATEESKPKRTRKAKTE) is disordered.

It belongs to the bacterial ribosomal protein bS18 family. In terms of assembly, part of the 30S ribosomal subunit. Forms a tight heterodimer with protein bS6.

Its function is as follows. Binds as a heterodimer with protein bS6 to the central domain of the 16S rRNA, where it helps stabilize the platform of the 30S subunit. This is Small ribosomal subunit protein bS18 from Metamycoplasma arthritidis (strain 158L3-1) (Mycoplasma arthritidis).